A 118-amino-acid polypeptide reads, in one-letter code: Large ribosomal subunit protein bL20 (118 aa).

This sequence belongs to the bacterial ribosomal protein bL20 family.

Its function is as follows. Binds directly to 23S ribosomal RNA and is necessary for the in vitro assembly process of the 50S ribosomal subunit. It is not involved in the protein synthesizing functions of that subunit. This chain is Large ribosomal subunit protein bL20, found in Acidiphilium cryptum (strain JF-5).